Here is a 21-residue protein sequence, read N- to C-terminus: M-lycotoxin-Ls4a (21 aa).

Leucine amide is present on Leu-21.

As to expression, expressed by the venom gland.

Its subcellular location is the secreted. Functionally, may inhibit growth of bacteria. This is M-lycotoxin-Ls4a from Lycosa singoriensis (Wolf spider).